We begin with the raw amino-acid sequence, 193 residues long: Peptidyl-tRNA hydrolase (193 aa).

Residue Tyr16 participates in tRNA binding. The active-site Proton acceptor is the His21. Positions 67, 69, and 115 each coordinate tRNA.

Belongs to the PTH family. In terms of assembly, monomer.

The protein resides in the cytoplasm. It catalyses the reaction an N-acyl-L-alpha-aminoacyl-tRNA + H2O = an N-acyl-L-amino acid + a tRNA + H(+). Hydrolyzes ribosome-free peptidyl-tRNAs (with 1 or more amino acids incorporated), which drop off the ribosome during protein synthesis, or as a result of ribosome stalling. Functionally, catalyzes the release of premature peptidyl moieties from peptidyl-tRNA molecules trapped in stalled 50S ribosomal subunits, and thus maintains levels of free tRNAs and 50S ribosomes. This chain is Peptidyl-tRNA hydrolase, found in Psychrobacter arcticus (strain DSM 17307 / VKM B-2377 / 273-4).